The following is a 173-amino-acid chain: Large ribosomal subunit protein uL10 (173 aa).

It belongs to the universal ribosomal protein uL10 family. In terms of assembly, part of the ribosomal stalk of the 50S ribosomal subunit. The N-terminus interacts with L11 and the large rRNA to form the base of the stalk. The C-terminus forms an elongated spine to which L12 dimers bind in a sequential fashion forming a multimeric L10(L12)X complex.

Functionally, forms part of the ribosomal stalk, playing a central role in the interaction of the ribosome with GTP-bound translation factors. This chain is Large ribosomal subunit protein uL10, found in Christiangramia forsetii (strain DSM 17595 / CGMCC 1.15422 / KT0803) (Gramella forsetii).